The following is a 373-amino-acid chain: Meiosis-specific kinetochore protein (373 aa).

Disordered regions lie at residues methionine 1 to lysine 91 and serine 250 to threonine 276. The segment covering serine 77–lysine 91 has biased composition (basic and acidic residues). Residues serine 275–proline 277 carry the POLO box domain (PBD)-binding motif. Positions glutamate 332 to cysteine 335 are required for localization to kinetochores.

In terms of assembly, interacts with CENPC. Interacts with PLK1; required for recruitment of PLK1 at kinetochores.

The protein localises to the chromosome. Its subcellular location is the centromere. It is found in the kinetochore. In terms of biological role, key regulator of kinetochore function during meiosis I: required both for mono-orientation of kinetochores on sister chromosomes and protection of centromeric cohesin from separase-mediated cleavage. Acts by facilitating kinetochore mono-orientation during meiosis I, when kinetochores on sister chromosomes face the same direction and are thus captured and pulled by spindle fibers from the same pole. Also required to prevent cleavage of cohesin at centromeres during meiosis I, possibly by acting as a regulator of the shugoshin-dependent protection pathway. Acts in collaboration with PLK1: required for PLK1 enrichment to kinetochores. Not required during meiosis II or mitosis. The polypeptide is Meiosis-specific kinetochore protein (Homo sapiens (Human)).